The following is a 357-amino-acid chain: MATTLSSSSLFIQFRGRRYNSLSSFNNLQKRTVLSLSCALSSQGGDMIPPEGKSNDRNSAFDFKSYMIRKAESVSAALNVSVPLQEPLTIQEAVRYSLLAGGKRVRPLLCIAACELVGGDEATAMSAACAVEMIHTSSLIHDDLPCMDDADLRRGKPTNHKEFGEDMAVLAGDALLALAFEHMTFVSNGLVAPERMIRAVMELAKAIGTKGLVAGQVTDLCSQGLNPDDVGLERLEFIHLHKTAALLEAAAVLGAIMGGGTEEEIEKLRKYARCIGLLFQVVDDILDVTESTKELGKTAGKDVMAGKLTYPRLIGLERSREVAEKLRREAAEQLLGFDSDKAAPLVALASYIACRHN.

The transit peptide at 1–37 directs the protein to the chloroplast; the sequence is MATTLSSSSLFIQFRGRRYNSLSSFNNLQKRTVLSLS. Residues Lys-103, Arg-106, and His-135 each coordinate isopentenyl diphosphate. Positions 142 and 148 each coordinate Mg(2+). Residue Arg-153 coordinates dimethylallyl diphosphate. Isopentenyl diphosphate is bound at residue Arg-154. Dimethylallyl diphosphate contacts are provided by Lys-242, Thr-243, Gln-280, Lys-297, and Lys-307.

This sequence belongs to the FPP/GGPP synthase family. Monomer. Mg(2+) serves as cofactor.

It is found in the plastid. Its subcellular location is the chloroplast. The catalysed reaction is isopentenyl diphosphate + dimethylallyl diphosphate = (2E)-geranyl diphosphate + diphosphate. It catalyses the reaction isopentenyl diphosphate + (2E)-geranyl diphosphate = (2E,6E)-farnesyl diphosphate + diphosphate. The enzyme catalyses isopentenyl diphosphate + (2E,6E)-farnesyl diphosphate = (2E,6E,10E)-geranylgeranyl diphosphate + diphosphate. The protein operates within isoprenoid biosynthesis; farnesyl diphosphate biosynthesis; farnesyl diphosphate from geranyl diphosphate and isopentenyl diphosphate: step 1/1. Its pathway is isoprenoid biosynthesis; geranyl diphosphate biosynthesis; geranyl diphosphate from dimethylallyl diphosphate and isopentenyl diphosphate: step 1/1. It functions in the pathway isoprenoid biosynthesis; geranylgeranyl diphosphate biosynthesis; geranylgeranyl diphosphate from farnesyl diphosphate and isopentenyl diphosphate: step 1/1. Its function is as follows. Catalyzes the trans-addition of the three molecules of IPP onto DMAPP to form geranylgeranyl pyrophosphate. The sequence is that of Geranylgeranyl pyrophosphate synthase 11, chloroplastic from Arabidopsis thaliana (Mouse-ear cress).